We begin with the raw amino-acid sequence, 507 residues long: MEFLLGNPFSTPVGQCLEKATDGSLQSEDWTLNMEICDIINETEEGPKDAIRALKKRLSGNRNYREVMLALTVLETCVKNCGHRFHLLVANRDFIDSVLVKIISPKNNPPTIVQDKVLALIQAWADAFRSSPDLTGVVHIYEELKRRGIEFPMADLDALSPIHTPQRSVPEMDPAATIPRSQTQPRTTAGTYSSPPPASYSTLQAPALSVTGPITANSEQIARLRSELDIVRGNTKVMSEMLTEMVPGQEDSSDLELLQELNRTCRAMQHRIVELISRVSNEEVTEELLHVNDDLNNVFLRYERFERYRSGRSVQNASNGVLSEVTEDNLIDLGPGSPAVVSPMVGSTAPPSSLSSQLAGLDLGTESVSGTLSSLQQCKPQDGFDMFAQTRGNSLAEQRKTVTYEDPQAVGGLASALDNRKQNSEMIPVAQPSVMDDIEVWLRTDLKGDDLEEGVTSEEFDKFLEERAKAAETVPDLPSPPTEAPAPASNTSTRKKPERSDDALFAL.

Residues alanine 20–proline 152 form the VHS domain. Phosphoserine is present on serine 160. Position 164 is a phosphothreonine (threonine 164). The tract at residues threonine 164–tyrosine 200 is disordered. In terms of domain architecture, GAT spans glutamate 219–arginine 307. Positions asparagine 329–glycine 334 match the Clathrin-binding motif. A disordered region spans residues glutamate 466 to leucine 507. Residues glutamate 498 to leucine 507 are compositionally biased toward basic and acidic residues.

This sequence belongs to the TOM1 family. Interacts with clathrin, SRC and TOLLIP. Interacts with MYO6. In terms of tissue distribution, ubiquitously expressed. Splicing pattern displays tissue specific variation.

Functionally, acts as a MYO6/Myosin VI adapter protein that targets myosin VI to endocytic structures. May also play a role in recruiting clathrin to endosomes. May regulate growth factor-induced mitogenic signaling. In Mus musculus (Mouse), this protein is TOM1-like protein 2 (Tom1l2).